Reading from the N-terminus, the 343-residue chain is UDP-3-O-(3-hydroxymyristoyl)glucosamine N-acyltransferase (343 aa).

Residue His-239 is the Proton acceptor of the active site.

Belongs to the transferase hexapeptide repeat family. LpxD subfamily. In terms of assembly, homotrimer.

The catalysed reaction is a UDP-3-O-[(3R)-3-hydroxyacyl]-alpha-D-glucosamine + a (3R)-hydroxyacyl-[ACP] = a UDP-2-N,3-O-bis[(3R)-3-hydroxyacyl]-alpha-D-glucosamine + holo-[ACP] + H(+). It catalyses the reaction UDP-3-O-[(3R)-3-hydroxytetradecanoyl]-alpha-D-glucosamine + (3R)-hydroxytetradecanoyl-[ACP] = UDP-2-N,3-O-bis[(3R)-3-hydroxytetradecanoyl]-alpha-D-glucosamine + holo-[ACP] + H(+). It functions in the pathway glycolipid biosynthesis; lipid IV(A) biosynthesis; lipid IV(A) from (3R)-3-hydroxytetradecanoyl-[acyl-carrier-protein] and UDP-N-acetyl-alpha-D-glucosamine: step 3/6. In terms of biological role, catalyzes the N-acylation of UDP-3-O-(hydroxytetradecanoyl)glucosamine using 3-hydroxytetradecanoyl-ACP as the acyl donor. Is involved in the biosynthesis of lipid A, a phosphorylated glycolipid that anchors the lipopolysaccharide to the outer membrane of the cell. This chain is UDP-3-O-(3-hydroxymyristoyl)glucosamine N-acyltransferase, found in Blochmanniella pennsylvanica (strain BPEN).